The sequence spans 336 residues: Phenylalanine--tRNA ligase alpha subunit (336 aa).

Glu259 contributes to the Mg(2+) binding site.

This sequence belongs to the class-II aminoacyl-tRNA synthetase family. Phe-tRNA synthetase alpha subunit type 1 subfamily. Tetramer of two alpha and two beta subunits. Mg(2+) is required as a cofactor.

The protein localises to the cytoplasm. It catalyses the reaction tRNA(Phe) + L-phenylalanine + ATP = L-phenylalanyl-tRNA(Phe) + AMP + diphosphate + H(+). This chain is Phenylalanine--tRNA ligase alpha subunit, found in Tropheryma whipplei (strain Twist) (Whipple's bacillus).